The following is a 293-amino-acid chain: Ribosomal protein L11 methyltransferase (293 aa).

T145, G166, D188, and N230 together coordinate S-adenosyl-L-methionine.

This sequence belongs to the methyltransferase superfamily. PrmA family.

The protein resides in the cytoplasm. The catalysed reaction is L-lysyl-[protein] + 3 S-adenosyl-L-methionine = N(6),N(6),N(6)-trimethyl-L-lysyl-[protein] + 3 S-adenosyl-L-homocysteine + 3 H(+). Its function is as follows. Methylates ribosomal protein L11. In Escherichia coli (strain 55989 / EAEC), this protein is Ribosomal protein L11 methyltransferase.